The primary structure comprises 131 residues: Ribosome-binding factor A (131 aa).

Belongs to the RbfA family. As to quaternary structure, monomer. Binds 30S ribosomal subunits, but not 50S ribosomal subunits or 70S ribosomes.

It localises to the cytoplasm. In terms of biological role, one of several proteins that assist in the late maturation steps of the functional core of the 30S ribosomal subunit. Associates with free 30S ribosomal subunits (but not with 30S subunits that are part of 70S ribosomes or polysomes). Required for efficient processing of 16S rRNA. May interact with the 5'-terminal helix region of 16S rRNA. The protein is Ribosome-binding factor A of Vibrio vulnificus (strain CMCP6).